The primary structure comprises 263 residues: Shikimate dehydrogenase (NADP(+)) (263 aa).

Residues S16–S18 and T65 contribute to the shikimate site. Catalysis depends on K69, which acts as the Proton acceptor. Shikimate contacts are provided by N90 and D105. NADP(+) contacts are provided by residues G125–S129 and L208. Y210 is a binding site for shikimate. Position 230 (G230) interacts with NADP(+).

Belongs to the shikimate dehydrogenase family. Homodimer.

The enzyme catalyses shikimate + NADP(+) = 3-dehydroshikimate + NADPH + H(+). It functions in the pathway metabolic intermediate biosynthesis; chorismate biosynthesis; chorismate from D-erythrose 4-phosphate and phosphoenolpyruvate: step 4/7. In terms of biological role, involved in the biosynthesis of the chorismate, which leads to the biosynthesis of aromatic amino acids. Catalyzes the reversible NADPH linked reduction of 3-dehydroshikimate (DHSA) to yield shikimate (SA). This Helicobacter pylori (strain P12) protein is Shikimate dehydrogenase (NADP(+)).